Here is a 56-residue protein sequence, read N- to C-terminus: Large ribosomal subunit protein bL32 (56 aa).

Belongs to the bacterial ribosomal protein bL32 family.

The protein is Large ribosomal subunit protein bL32 of Prochlorococcus marinus (strain MIT 9301).